The chain runs to 193 residues: Ribosome maturation factor RimM (193 aa).

In terms of domain architecture, PRC barrel spans 100–173; the sequence is DDEFYYADLE…TLLIDPLAAG (74 aa).

This sequence belongs to the RimM family. Binds ribosomal protein uS19.

Its subcellular location is the cytoplasm. An accessory protein needed during the final step in the assembly of 30S ribosomal subunit, possibly for assembly of the head region. Essential for efficient processing of 16S rRNA. May be needed both before and after RbfA during the maturation of 16S rRNA. It has affinity for free ribosomal 30S subunits but not for 70S ribosomes. The protein is Ribosome maturation factor RimM of Rhizobium etli (strain CIAT 652).